The chain runs to 566 residues: Oxygen-dependent choline dehydrogenase (566 aa).

7-36 (DYIICGAGSAGNVLATRLTEDPNVTVLLLE) is an FAD binding site. A disordered region spans residues 183–203 (QQEGFGPMDRTVTPKGRRAST). The Proton acceptor role is filled by His-474.

Belongs to the GMC oxidoreductase family. Requires FAD as cofactor.

The enzyme catalyses choline + A = betaine aldehyde + AH2. The catalysed reaction is betaine aldehyde + NAD(+) + H2O = glycine betaine + NADH + 2 H(+). It functions in the pathway amine and polyamine biosynthesis; betaine biosynthesis via choline pathway; betaine aldehyde from choline (cytochrome c reductase route): step 1/1. Its function is as follows. Involved in the biosynthesis of the osmoprotectant glycine betaine. Catalyzes the oxidation of choline to betaine aldehyde and betaine aldehyde to glycine betaine at the same rate. The chain is Oxygen-dependent choline dehydrogenase from Burkholderia ambifaria (strain ATCC BAA-244 / DSM 16087 / CCUG 44356 / LMG 19182 / AMMD) (Burkholderia cepacia (strain AMMD)).